Here is a 530-residue protein sequence, read N- to C-terminus: FSD1-like protein (530 aa).

At methionine 1 the chain carries N-acetylmethionine. Residues 102 to 141 (KQEQARKSQELQSQISQCNNALENSEELLEFATRSLDIKE) adopt a coiled-coil conformation. The COS domain occupies 137 to 194 (LDIKEPEEFSKAARQIKDRVTMASAFRLSLKPKVSDNMTHLMVDFSQERQMLQTLKFL). In terms of domain architecture, Fibronectin type-III spans 196–300 (VPKAPEIDPV…DPVTLETKAL (105 aa)). The region spanning 300 to 506 (LNFNLDNSSS…LSTGMQVPSA (207 aa)) is the B30.2/SPRY domain. Positions 322 to 366 (WDPTGGKGQESKIKGKENKGRSGTPSPKRTSVGSRPPAVRGSRDR) are disordered. Residues 330–341 (QESKIKGKENKG) show a composition bias toward basic and acidic residues. Over residues 342 to 354 (RSGTPSPKRTSVG) the composition is skewed to polar residues. 2 positions are modified to phosphoserine: serine 520 and serine 523.

This chain is FSD1-like protein (FSD1L), found in Homo sapiens (Human).